A 124-amino-acid chain; its full sequence is Flagellar transcriptional regulator FlhD (124 aa).

The protein belongs to the FlhD family. In terms of assembly, homodimer; disulfide-linked. Forms a heterohexamer composed of two FlhC and four FlhD subunits. Each FlhC binds a FlhD dimer, forming a heterotrimer, and a hexamer assembles by dimerization of two heterotrimers.

It is found in the cytoplasm. Functionally, functions in complex with FlhC as a master transcriptional regulator that regulates transcription of several flagellar and non-flagellar operons by binding to their promoter region. Activates expression of class 2 flagellar genes, including fliA, which is a flagellum-specific sigma factor that turns on the class 3 genes. Also regulates genes whose products function in a variety of physiological pathways. This Pectobacterium carotovorum (Erwinia carotovora) protein is Flagellar transcriptional regulator FlhD.